A 207-amino-acid polypeptide reads, in one-letter code: Outer-membrane lipoprotein LolB (207 aa).

The signal sequence occupies residues 1–21 (MTLPDFRLIRLLPLASLVLTA). The N-palmitoyl cysteine moiety is linked to residue Cys-22. Cys-22 carries S-diacylglycerol cysteine lipidation.

Belongs to the LolB family. As to quaternary structure, monomer.

Its subcellular location is the cell outer membrane. Functionally, plays a critical role in the incorporation of lipoproteins in the outer membrane after they are released by the LolA protein. This is Outer-membrane lipoprotein LolB from Salmonella schwarzengrund (strain CVM19633).